We begin with the raw amino-acid sequence, 380 residues long: Tryptophan 2,3-dioxygenase (380 aa).

Substrate-binding positions include 57–61 and R128; that span reads FIITH. H313 is a binding site for heme. Residue T328 participates in substrate binding.

Belongs to the tryptophan 2,3-dioxygenase family. As to quaternary structure, homotetramer. Dimer of dimers. It depends on heme as a cofactor.

It catalyses the reaction L-tryptophan + O2 = N-formyl-L-kynurenine. Its pathway is amino-acid degradation; L-tryptophan degradation via kynurenine pathway; L-kynurenine from L-tryptophan: step 1/2. It functions in the pathway pigment biosynthesis; ommochrome biosynthesis. Heme-dependent dioxygenase that catalyzes the oxidative cleavage of the L-tryptophan (L-Trp) pyrrole ring and converts L-tryptophan to N-formyl-L-kynurenine. Catalyzes the oxidative cleavage of the indole moiety. This chain is Tryptophan 2,3-dioxygenase, found in Drosophila willistoni (Fruit fly).